The following is a 232-amino-acid chain: Ion-translocating oxidoreductase complex subunit E (232 aa).

Transmembrane regions (helical) follow at residues 18-38 (GLVQLLGLCPLLAVTATITNA), 39-59 (LGLGVATMLVLIGSNILVSLV), 69-89 (IPVFVMIIAALVTTVQLLINA), 93-113 (GLYLSLGIFLPLIVTNCIIIG), 127-147 (AAFDGLMMGLGFTLVLAVLGA), and 182-202 (PFLLAMLPPGAFIVMGLLIAL).

The protein belongs to the NqrDE/RnfAE family. The complex is composed of six subunits: RnfA, RnfB, RnfC, RnfD, RnfE and RnfG.

The protein localises to the cell inner membrane. Part of a membrane-bound complex that couples electron transfer with translocation of ions across the membrane. This chain is Ion-translocating oxidoreductase complex subunit E, found in Shewanella sp. (strain W3-18-1).